Reading from the N-terminus, the 2183-residue chain is Genome polyprotein (2183 aa).

Gly-2 is lipidated: N-myristoyl glycine; by host. The Cytoplasmic segment spans residues 2-1493 (GAQVSTQKTG…HVSRAFICLQ (1492 aa)). The tract at residues 566–582 (FYQGPTEESVERAMGRV) is amphipathic alpha-helix. Residues His-870 and Asp-888 each act as for protease 2A activity in the active site. Residues Cys-905 and Cys-907 each contribute to the Zn(2+) site. Catalysis depends on Cys-959, which acts as the For protease 2A activity. Zn(2+) is bound by residues Cys-965 and His-967. The tract at residues 1099-1171 (NNNWLKKFTE…EQSAPSQSDQ (73 aa)) is membrane-binding. An oligomerization region spans residues 1099-1237 (NNNWLKKFTE…SPGAGKSVAT (139 aa)). An RNA-binding region spans residues 1120-1124 (AVKIQ). The region spanning 1203 to 1359 (EKKMSNYIQF…SMYSQNGKIN (157 aa)) is the SF3 helicase domain. Zn(2+) is bound by residues Cys-1367, Cys-1379, and Cys-1384. Residues 1367–1384 (CDEECCPVNFKKCCPLVC) form a C4-type; degenerate zinc finger. Positions 1411–1418 (EYNHRHSV) are RNA-binding. The segment at 1422 to 1427 (LEALFQ) is oligomerization. Residues 1494–1509 (ALTTFVSVAGIIYIIY) lie within the membrane without spanning it. The Cytoplasmic portion of the chain corresponds to 1510-2183 (KLFAGFQGAY…TLRRKWLDAF (674 aa)). Tyr-1519 is subject to O-(5'-phospho-RNA)-tyrosine. The region spanning 1539-1717 (GPAFEFAVAM…FSASLLRHYF (179 aa)) is the Peptidase C3 domain. Active-site for protease 3C activity residues include His-1578, Glu-1609, and Cys-1685. The 117-residue stretch at 1948-2064 (GHLRAFDYSG…SYPLPIDASL (117 aa)) folds into the RdRp catalytic domain. Positions 1954 and 2050 each coordinate Mg(2+).

The protein belongs to the picornaviruses polyprotein family. As to quaternary structure, interacts with capsid protein VP1 and capsid protein VP3 to form heterotrimeric protomers. Interacts with capsid protein VP0, and capsid protein VP3 to form heterotrimeric protomers. Five protomers subsequently associate to form pentamers which serve as building blocks for the capsid. Interacts with capsid protein VP2, capsid protein VP3 and capsid protein VP4 following cleavage of capsid protein VP0. Interacts with host CXADR. In terms of assembly, interacts with capsid protein VP1 and capsid protein VP3 in the mature capsid. As to quaternary structure, interacts with capsid protein VP0 and capsid protein VP1 to form heterotrimeric protomers. Five protomers subsequently associate to form pentamers which serve as building blocks for the capsid. Interacts with capsid protein VP4 in the mature capsid. Interacts with protein 2C; this interaction may be important for virion morphogenesis. Interacts with capsid protein VP1 and capsid protein VP3. In terms of assembly, homodimer. As to quaternary structure, homohexamer; forms a hexameric ring structure with 6-fold symmetry characteristic of AAA+ ATPases. Interacts (via N-terminus) with host RTN3 (via reticulon domain); this interaction is important for viral replication. Interacts with capsid protein VP3; this interaction may be important for virion morphogenesis. Interacts with protein 3CD. In terms of assembly, homodimer. Interacts with host GBF1. Interacts (via GOLD domain) with host ACBD3 (via GOLD domain); this interaction allows the formation of a viral protein 3A/ACBD3 heterotetramer with a 2:2 stoichiometry, which will stimulate the recruitment of host PI4KB in order to synthesize PI4P at the viral RNA replication sites. As to quaternary structure, interacts with RNA-directed RNA polymerase. Interacts with protein 3AB and with RNA-directed RNA polymerase. In terms of assembly, interacts with Viral protein genome-linked and with protein 3CD. Mg(2+) is required as a cofactor. In terms of processing, specific enzymatic cleavages in vivo by the viral proteases yield processing intermediates and the mature proteins. Post-translationally, myristoylation is required for the formation of pentamers during virus assembly. Further assembly of 12 pentamers and a molecule of genomic RNA generates the provirion. During virion maturation, immature virions are rendered infectious following cleavage of VP0 into VP4 and VP2. This maturation seems to be an autocatalytic event triggered by the presence of RNA in the capsid and it is followed by a conformational change infectious virion. In terms of processing, myristoylation is required during RNA encapsidation and formation of the mature virus particle. Post-translationally, VPg is uridylylated by the polymerase into VPg-pUpU. This acts as a nucleotide-peptide primer for the genomic RNA replication.

Its subcellular location is the virion. It is found in the host cytoplasm. The protein localises to the host cytoplasmic vesicle membrane. It localises to the host nucleus. It carries out the reaction a ribonucleoside 5'-triphosphate + H2O = a ribonucleoside 5'-diphosphate + phosphate + H(+). The enzyme catalyses Selective cleavage of Tyr-|-Gly bond in the picornavirus polyprotein.. It catalyses the reaction RNA(n) + a ribonucleoside 5'-triphosphate = RNA(n+1) + diphosphate. The catalysed reaction is Selective cleavage of Gln-|-Gly bond in the poliovirus polyprotein. In other picornavirus reactions Glu may be substituted for Gln, and Ser or Thr for Gly.. Its activity is regulated as follows. Replication or transcription is subject to high level of random mutations by the nucleotide analog ribavirin. Functionally, forms an icosahedral capsid of pseudo T=3 symmetry with capsid proteins VP2 and VP3. The capsid is 300 Angstroms in diameter, composed of 60 copies of each capsid protein and enclosing the viral positive strand RNA genome. Capsid protein VP1 mainly forms the vertices of the capsid. Capsid protein VP1 interacts with host CXADR to provide virion attachment to target host cells. This attachment induces virion internalization. Tyrosine kinases are probably involved in the entry process. After binding to its receptor, the capsid undergoes conformational changes. Capsid protein VP1 N-terminus (that contains an amphipathic alpha-helix) and capsid protein VP4 are externalized. Together, they shape a pore in the host membrane through which viral genome is translocated to host cell cytoplasm. Forms an icosahedral capsid of pseudo T=3 symmetry with capsid proteins VP2 and VP3. The capsid is 300 Angstroms in diameter, composed of 60 copies of each capsid protein and enclosing the viral positive strand RNA genome. In terms of biological role, lies on the inner surface of the capsid shell. After binding to the host receptor, the capsid undergoes conformational changes. Capsid protein VP4 is released, Capsid protein VP1 N-terminus is externalized, and together, they shape a pore in the host membrane through which the viral genome is translocated into the host cell cytoplasm. Its function is as follows. Component of immature procapsids, which is cleaved into capsid proteins VP4 and VP2 after maturation. Allows the capsid to remain inactive before the maturation step. Functionally, cysteine protease that cleaves viral polyprotein and specific host proteins. It is responsible for the autocatalytic cleavage between the P1 and P2 regions, which is the first cleavage occurring in the polyprotein. Also cleaves the host translation initiation factor EIF4G1, in order to shut down the capped cellular mRNA translation. Inhibits the host nucleus-cytoplasm protein and RNA trafficking by cleaving host members of the nuclear pores. Counteracts stress granule formation probably by antagonizing its assembly or promoting its dissassembly. Cleaves and inhibits host IFIH1/MDA5, thereby inhibiting the type-I IFN production and the establishment of the antiviral state. Cleaves and inhibits host MAVS, thereby inhibiting the type-I IFN production and the establishment of the antiviral state. Plays an essential role in the virus replication cycle by acting as a viroporin. Creates a pore in the host endoplasmic reticulum and as a consequence releases Ca2+ in the cytoplasm of infected cell. In turn, high levels of cytoplasmic calcium may trigger membrane trafficking and transport of viral ER-associated proteins to viroplasms, sites of viral genome replication. In terms of biological role, induces and associates with structural rearrangements of intracellular membranes. Displays RNA-binding, nucleotide binding and NTPase activities. May play a role in virion morphogenesis and viral RNA encapsidation by interacting with the capsid protein VP3. Its function is as follows. Localizes the viral replication complex to the surface of membranous vesicles. Together with protein 3CD binds the Cis-Active RNA Element (CRE) which is involved in RNA synthesis initiation. Acts as a cofactor to stimulate the activity of 3D polymerase, maybe through a nucleid acid chaperone activity. Functionally, localizes the viral replication complex to the surface of membranous vesicles. It inhibits host cell endoplasmic reticulum-to-Golgi apparatus transport and causes the disassembly of the Golgi complex, possibly through GBF1 interaction. This would result in depletion of MHC, trail receptors and IFN receptors at the host cell surface. Plays an essential role in viral RNA replication by recruiting ACBD3 and PI4KB at the viral replication sites, thereby allowing the formation of the rearranged membranous structures where viral replication takes place. Acts as a primer for viral RNA replication and remains covalently bound to viral genomic RNA. VPg is uridylylated prior to priming replication into VPg-pUpU. The oriI viral genomic sequence may act as a template for this. The VPg-pUpU is then used as primer on the genomic RNA poly(A) by the RNA-dependent RNA polymerase to replicate the viral genome. During genome replication, the VPg-RNA linkage is removed by the host TDP2, thereby accelerating replication. During the late stage of the replication cycle, host TDP2 is excluded from sites of viral RNA synthesis and encapsidation, allowing for the generation of progeny virions. In terms of biological role, involved in the viral replication complex and viral polypeptide maturation. It exhibits protease activity with a specificity and catalytic efficiency that is different from protease 3C. Protein 3CD lacks polymerase activity. Protein 3CD binds to the 5'UTR of the viral genome. Its function is as follows. Replicates the viral genomic RNA on the surface of intracellular membranes. May form linear arrays of subunits that propagate along a strong head-to-tail interaction called interface-I. Covalently attaches UMP to a tyrosine of VPg, which is used to prime RNA synthesis. The positive stranded RNA genome is first replicated at virus induced membranous vesicles, creating a dsRNA genomic replication form. This dsRNA is then used as template to synthesize positive stranded RNA genomes. ss(+)RNA genomes are either translated, replicated or encapsidated. Functionally, major viral protease that mediates proteolytic processing of the polyprotein. Cleaves host EIF5B, contributing to host translation shutoff. Also cleaves host PABPC1, contributing to host translation shutoff. Cleaves host NLRP1, triggers host N-glycine-mediated degradation of the autoinhibitory NLRP1 N-terminal fragment. The sequence is that of Genome polyprotein from Coxsackievirus B4 (strain E2).